Here is a 705-residue protein sequence, read N- to C-terminus: Tryptophan synthase (705 aa).

Residues 1–293 are tryptophan synthase alpha chain; it reads MEAIKKVFEQ…QLTPNAETAK (293 aa). Active-site proton acceptor residues include Glu49 and Asp60. Residues 266–287 form a disordered region; sequence KGEPSRVRSPGAAQRTPSQLTP. Residues 294–705 are tryptophan synthase beta chain; that stretch reads GVENILPARF…HVSSNAIPSK (412 aa). At Lys381 the chain carries N6-(pyridoxal phosphate)lysine.

This sequence in the N-terminal section; belongs to the TrpA family. In the C-terminal section; belongs to the TrpB family. It depends on pyridoxal 5'-phosphate as a cofactor.

It catalyses the reaction (1S,2R)-1-C-(indol-3-yl)glycerol 3-phosphate + L-serine = D-glyceraldehyde 3-phosphate + L-tryptophan + H2O. Its pathway is amino-acid biosynthesis; L-tryptophan biosynthesis; L-tryptophan from chorismate: step 5/5. In Coprinopsis cinerea (Inky cap fungus), this protein is Tryptophan synthase (TRP-1).